A 341-amino-acid chain; its full sequence is GTPase Obg (341 aa).

The Obg domain maps to 2–160 (SGFIDEVPIQ…FSLILELKLL (159 aa)). In terms of domain architecture, OBG-type G spans 161-330 (ADIGIVGLPN…LLERIDKVFF (170 aa)). GTP contacts are provided by residues 167–174 (GLPNAGKS), 192–196 (FTTLS), 215–218 (DIPG), 282–285 (NKMD), and 311–313 (SAD). S174 and T194 together coordinate Mg(2+).

It belongs to the TRAFAC class OBG-HflX-like GTPase superfamily. OBG GTPase family. As to quaternary structure, monomer. Mg(2+) is required as a cofactor.

Its subcellular location is the cytoplasm. An essential GTPase which binds GTP, GDP and possibly (p)ppGpp with moderate affinity, with high nucleotide exchange rates and a fairly low GTP hydrolysis rate. Plays a role in control of the cell cycle, stress response, ribosome biogenesis and in those bacteria that undergo differentiation, in morphogenesis control. The protein is GTPase Obg of Leptospira biflexa serovar Patoc (strain Patoc 1 / Ames).